Consider the following 744-residue polypeptide: 1,4-alpha-glucan branching enzyme GlgB (744 aa).

The active-site Nucleophile is the Asp-415. Catalysis depends on Glu-468, which acts as the Proton donor.

This sequence belongs to the glycosyl hydrolase 13 family. GlgB subfamily. Monomer.

The catalysed reaction is Transfers a segment of a (1-&gt;4)-alpha-D-glucan chain to a primary hydroxy group in a similar glucan chain.. Its pathway is glycan biosynthesis; glycogen biosynthesis. Functionally, catalyzes the formation of the alpha-1,6-glucosidic linkages in glycogen by scission of a 1,4-alpha-linked oligosaccharide from growing alpha-1,4-glucan chains and the subsequent attachment of the oligosaccharide to the alpha-1,6 position. This Shewanella frigidimarina (strain NCIMB 400) protein is 1,4-alpha-glucan branching enzyme GlgB.